A 290-amino-acid chain; its full sequence is Nucleotide-binding protein Sde_3181 (290 aa).

8-15 (GRSGSGKT) is an ATP binding site. Residue 60-63 (DARN) participates in GTP binding.

Belongs to the RapZ-like family.

Displays ATPase and GTPase activities. The chain is Nucleotide-binding protein Sde_3181 from Saccharophagus degradans (strain 2-40 / ATCC 43961 / DSM 17024).